Consider the following 466-residue polypeptide: MSVVPVADVLQGRVAVDSEVTVRGWVRTRRDSKAGISFLAVYDGSCFDPVQAVINNSLPNYNEDVLRLTTGCSVIVTGKVVASPGQGQQFEIQASKVEVAGWVEDPDTYPMAAKRHSIEYLREVAHLRPRTNLIGAVARVRHTLAQALHRFFNEQGFFWVSTPLITASDTEGAGEMFRVSTLDLENLPRNDQGKVDFDKDFFGKESFLTVSGQLNGETYACALSKIYTFGPTFRAENSNTSRHLAEFWMLEPEVAFANLNDIAGLAEAMLKYVFKAVLEERADDMKFFAERVDKDAVSRLERFIEADFAQVDYTDAVTILENCGRKFENPVYWGVDLSSEHERYLAEEHFKAPVVVKNYPKDIKAFYMRLNEDGKTVAAMDVLAPGIGEIIGGSQREERLDVLDERMLEMGLNKEDYWWYRDLRRYGTVPHSGFGLGFERLIAYVTGVQNVRDVIPFPRTPRNASF.

This sequence belongs to the class-II aminoacyl-tRNA synthetase family. Homodimer.

It is found in the cytoplasm. The enzyme catalyses tRNA(Asn) + L-asparagine + ATP = L-asparaginyl-tRNA(Asn) + AMP + diphosphate + H(+). The sequence is that of Asparagine--tRNA ligase from Escherichia coli O139:H28 (strain E24377A / ETEC).